A 172-amino-acid polypeptide reads, in one-letter code: MEKMYNVGKIVNTHGLIGEIRVIATTDFPEERFQVGNTVYLFEKNSKKPEKLIIRSHRKHKNFDLLMFEGFTGIHQVERMKEGVLKIKETQLTNLEENEFYFHEIIGCTVVTTDGEELGEITEILTPGANDVWVVKGADKKEKLIPYIADVVKEINIDDQKITIEVMEGLLD.

The PRC barrel domain maps to 97 to 170 (ENEFYFHEII…KITIEVMEGL (74 aa)).

The protein belongs to the RimM family. As to quaternary structure, binds ribosomal protein uS19.

It is found in the cytoplasm. Its function is as follows. An accessory protein needed during the final step in the assembly of 30S ribosomal subunit, possibly for assembly of the head region. Essential for efficient processing of 16S rRNA. May be needed both before and after RbfA during the maturation of 16S rRNA. It has affinity for free ribosomal 30S subunits but not for 70S ribosomes. The chain is Ribosome maturation factor RimM from Listeria monocytogenes serovar 1/2a (strain ATCC BAA-679 / EGD-e).